Reading from the N-terminus, the 495-residue chain is ATP synthase subunit beta, chloroplastic (495 aa).

172-179 is an ATP binding site; that stretch reads GGAGVGKT.

The protein belongs to the ATPase alpha/beta chains family. F-type ATPases have 2 components, CF(1) - the catalytic core - and CF(0) - the membrane proton channel. CF(1) has five subunits: alpha(3), beta(3), gamma(1), delta(1), epsilon(1). CF(0) has four main subunits: a(1), b(1), b'(1) and c(9-12).

Its subcellular location is the plastid. The protein resides in the chloroplast thylakoid membrane. It catalyses the reaction ATP + H2O + 4 H(+)(in) = ADP + phosphate + 5 H(+)(out). In terms of biological role, produces ATP from ADP in the presence of a proton gradient across the membrane. The catalytic sites are hosted primarily by the beta subunits. The protein is ATP synthase subunit beta, chloroplastic of Beaucarnea recurvata (Elephant-foot tree).